Here is a 121-residue protein sequence, read N- to C-terminus: MARIAGVNIPNHQHTEIGLTAIYGIGRTRSRDICVAAGVAFSKKVKDLTDADLEKLREEVGKFIVEGDLRRETTMNIKRLMDLGCYRGVRHRKGLPLRGQRTRTNARTRKGPRRAAQSLKK.

Residues 94–121 (GLPLRGQRTRTNARTRKGPRRAAQSLKK) form a disordered region.

It belongs to the universal ribosomal protein uS13 family. Part of the 30S ribosomal subunit. Forms a loose heterodimer with protein S19. Forms two bridges to the 50S subunit in the 70S ribosome.

Functionally, located at the top of the head of the 30S subunit, it contacts several helices of the 16S rRNA. In the 70S ribosome it contacts the 23S rRNA (bridge B1a) and protein L5 of the 50S subunit (bridge B1b), connecting the 2 subunits; these bridges are implicated in subunit movement. Contacts the tRNAs in the A and P-sites. This chain is Small ribosomal subunit protein uS13, found in Paraburkholderia phymatum (strain DSM 17167 / CIP 108236 / LMG 21445 / STM815) (Burkholderia phymatum).